The following is a 383-amino-acid chain: tRNA-specific 2-thiouridylase MnmA (383 aa).

Residues 9–16 and M35 each bind ATP; that span reads GMSGGVDS. Positions 95–97 are interaction with target base in tRNA; that stretch reads NPD. C100 acts as the Nucleophile in catalysis. A disulfide bridge links C100 with C196. G124 serves as a coordination point for ATP. An interaction with tRNA region spans residues 146–148; that stretch reads KDQ. C196 (cysteine persulfide intermediate) is an active-site residue. The segment at 308 to 309 is interaction with tRNA; it reads RY.

The protein belongs to the MnmA/TRMU family.

It is found in the cytoplasm. It carries out the reaction S-sulfanyl-L-cysteinyl-[protein] + uridine(34) in tRNA + AH2 + ATP = 2-thiouridine(34) in tRNA + L-cysteinyl-[protein] + A + AMP + diphosphate + H(+). Functionally, catalyzes the 2-thiolation of uridine at the wobble position (U34) of tRNA, leading to the formation of s(2)U34. This chain is tRNA-specific 2-thiouridylase MnmA, found in Burkholderia pseudomallei (strain 668).